The following is a 255-amino-acid chain: Pimeloyl-[acyl-carrier protein] methyl ester esterase (255 aa).

Residues W18, 78 to 79 (SL), and 139 to 143 (FLALD) contribute to the substrate site. Residue S78 is the Nucleophile of the active site. Active-site residues include D203 and H233. H233 is a binding site for substrate.

This sequence belongs to the AB hydrolase superfamily. Carboxylesterase BioH family. Monomer.

The protein resides in the cytoplasm. It carries out the reaction 6-carboxyhexanoyl-[ACP] methyl ester + H2O = 6-carboxyhexanoyl-[ACP] + methanol + H(+). It participates in cofactor biosynthesis; biotin biosynthesis. The physiological role of BioH is to remove the methyl group introduced by BioC when the pimeloyl moiety is complete. It allows to synthesize pimeloyl-ACP via the fatty acid synthetic pathway through the hydrolysis of the ester bonds of pimeloyl-ACP esters. This Xylella fastidiosa (strain 9a5c) protein is Pimeloyl-[acyl-carrier protein] methyl ester esterase.